A 362-amino-acid polypeptide reads, in one-letter code: Histidine protein methyltransferase 1 homolog (362 aa).

Residues 18 to 88 (TSLDDGTCVL…EACKHQPSWK (71 aa)) form a disordered region. Over residues 30–51 (QKGKQDKRQSTERPGLPRDHSW) the composition is skewed to basic and acidic residues. Residues 52–65 (KCSSLGNAASSEDT) show a composition bias toward polar residues. A phosphoserine mark is found at S62 and S67. Over residues 73 to 82 (DRSDDPEACK) the composition is skewed to basic and acidic residues. Tele-methylhistidine is present on H144. Residues 158–162 (IWECT), G185, and 206–208 (QDY) contribute to the S-adenosyl-L-methionine site. A Nuclear localization signal motif is present at residues 237–243 (PDGKRQR). Residues 259–261 (GEW) and S283 contribute to the S-adenosyl-L-methionine site.

It belongs to the methyltransferase superfamily. METTL18 family. Interacts with GRWD1 and members of the heat shock protein 90 and 70 families; these proteins may possibly be methylation substrates for the enzyme. In terms of processing, monomethylated at His-144 through automethylation. Automethylation at His-144 positively regulates the methyltransferase activity toward RPL3. Probably methylated on other residues.

The protein localises to the cytoplasm. It is found in the cytosol. It localises to the nucleus. The protein resides in the nucleolus. It catalyses the reaction L-histidyl-[protein] + S-adenosyl-L-methionine = N(tele)-methyl-L-histidyl-[protein] + S-adenosyl-L-homocysteine + H(+). Protein-L-histidine N-tele-methyltransferase that specifically monomethylates RPL3, thereby regulating translation elongation. Histidine methylation of RPL3 regulates translation elongation by slowing ribosome traversal on tyrosine codons: slower elongation provides enough time for proper folding of synthesized proteins and prevents cellular aggregation of tyrosine-rich proteins. This chain is Histidine protein methyltransferase 1 homolog, found in Mus musculus (Mouse).